A 163-amino-acid polypeptide reads, in one-letter code: Probable cobalt-precorrin-6B C(15)-methyltransferase (decarboxylating) (163 aa).

Residues Thr6, Gly30–Gly34, Asp51, and Gly75 each bind S-adenosyl-L-methionine.

This sequence belongs to the methyltransferase superfamily. Archaeal-type CbiT family.

It catalyses the reaction Co-precorrin-6B + S-adenosyl-L-methionine = Co-precorrin-7 + S-adenosyl-L-homocysteine + CO2. The protein operates within cofactor biosynthesis; adenosylcobalamin biosynthesis; cob(II)yrinate a,c-diamide from sirohydrochlorin (anaerobic route): step 8/10. Catalyzes the methylation of C-15 in cobalt-precorrin-6B followed by the decarboxylation of C-12 to form cobalt-precorrin-7. This chain is Probable cobalt-precorrin-6B C(15)-methyltransferase (decarboxylating), found in Archaeoglobus fulgidus (strain ATCC 49558 / DSM 4304 / JCM 9628 / NBRC 100126 / VC-16).